Here is a 601-residue protein sequence, read N- to C-terminus: Glutathione-regulated potassium-efflux system protein KefB (601 aa).

13 helical membrane passes run 4 to 24 (SDFLLAGVLFLFAAVAAVPLA), 29 to 49 (IGAVLGYLLAGIAIGPWGLGF), 55 to 75 (EILHFSELGVVFLMFIIGLEL), 87 to 107 (IFGVGAAQVLLSAALLAGLLM), 115 to 135 (AAVVGGIGLAMSSTAMALQLM), 152 to 172 (VLLFQDLAVIPALALVPLLAG), 177 to 197 (HFDWMKIGIKVLAFVGMLIGG), 207 to 227 (FIAASGVREVFTAATLLLVLG), 230 to 250 (LFMDALGLSMALGTFIAGVLL), 268 to 288 (GLLLGLFFISVGMSLNLGVLY), 291 to 311 (LLWVVISVVVLVAVKILVLYL), 324 to 344 (MQFAGVLSQGGEFAFVLFSTA), and 356 to 376 (ALLLVTVTLSMMTTPLLMKLV). In terms of domain architecture, RCK N-terminal spans 400-519 (KPQVIVVGFG…AGVTQFSRET (120 aa)).

Belongs to the monovalent cation:proton antiporter 2 (CPA2) transporter (TC 2.A.37) family. KefB subfamily. In terms of assembly, interacts with the regulatory subunit KefG.

Its subcellular location is the cell inner membrane. Its function is as follows. Pore-forming subunit of a potassium efflux system that confers protection against electrophiles. Catalyzes K(+)/H(+) antiport. In Escherichia coli (strain ATCC 8739 / DSM 1576 / NBRC 3972 / NCIMB 8545 / WDCM 00012 / Crooks), this protein is Glutathione-regulated potassium-efflux system protein KefB.